The following is a 118-amino-acid chain: NADH-ubiquinone oxidoreductase chain 3 (118 aa).

A run of 3 helical transmembrane segments spans residues 9–29, 62–82, and 87–107; these read IYLV…FLFA, LVSI…PWAV, and IDLF…IGSL.

Belongs to the complex I subunit 3 family.

It is found in the mitochondrion membrane. It catalyses the reaction a ubiquinone + NADH + 5 H(+)(in) = a ubiquinol + NAD(+) + 4 H(+)(out). In terms of biological role, core subunit of the mitochondrial membrane respiratory chain NADH dehydrogenase (Complex I) that is believed to belong to the minimal assembly required for catalysis. Complex I functions in the transfer of electrons from NADH to the respiratory chain. The immediate electron acceptor for the enzyme is believed to be ubiquinone. The protein is NADH-ubiquinone oxidoreductase chain 3 (ND3) of Zea mays (Maize).